The primary structure comprises 755 residues: Exocyst complex component 3 (755 aa).

2 coiled-coil regions span residues aspartate 34–glutamine 62 and arginine 618–phenylalanine 649. Lysine 38 is subject to N6-acetyllysine.

The protein belongs to the SEC6 family. In terms of assembly, the exocyst complex is composed of EXOC1, EXOC2, EXOC3, EXOC4, EXOC5, EXOC6, EXOC7 and EXOC8. Interacts with EXOC3L1. Interacts with BIRC6/bruce. Interacts with MYRIP. Interacts with SLC6A9. In terms of tissue distribution, widely expressed, with highest levels in kidney, followed by brain (at protein level).

The protein resides in the cytoplasm. Its subcellular location is the perinuclear region. It localises to the cell projection. The protein localises to the growth cone. It is found in the neuron projection. The protein resides in the midbody. Its subcellular location is the golgi apparatus. Its function is as follows. Component of the exocyst complex involved in the docking of exocytic vesicles with fusion sites on the plasma membrane. This is Exocyst complex component 3 (Exoc3) from Rattus norvegicus (Rat).